The sequence spans 864 residues: MDDGGNDVDSAEDGDPCDASCPLLMSPSKLASNCFNSASARSSRVNVRGCDTSFRWGRPPPSLFAAKSSLARLSSASHASYLETGHIDLKKNEGLLFINNIFPRKLQWVLEGSLRASRPYEEALKRIDRPHLAASDPLRIIRRVFPHELEVEIKEVVPRFREGGAFVKYTRNEGVKDTDIETAVKDHLEKHPIRPWFNPFQQVKVASVLGRPWIEDLYRIPSPRLRVEFLPGSANDLANDPTTESLYSLFRSYGKLRDIERQPSDSKILPRYAYVEFARPKFAVMAKNCMHGFTIAEKEGGGKFGTRLKINYERKIKLSMIKDWILSHPRIVIPAVAALIAAITVTVFDPIRTFFIKMKIKATLHVEENSVLGWIRKQVSKANIIGLGVVASDPRGLTAIWEDRQGDISQLQSWLTENTETFIIIHGPRGSGKRELVLDQALENYKYKVVIDCKQIQDARGDTAKIARAAGQVGYRPVFSWMNSISSFIDLAAQGMIGTKAGFSETLDAQLSNIWQSTATALKGVILDSRKKNDKDAHLTDEEYLEAHPELRPVVVIDNFLHNASEDNVVYEKITEWAAGLTSANIAHVIFLTTDVSFAKPLSKALPNSVFRTISLGDCSLEVGRRFVLNHLADEARTGDKPPRSEEYLEDLDSCIEILGGRVTDLEFMAHRIEAGETPNGAVNRIIEQSTSEILKMFILSTNTEAQWSHEQVWHLIKMLANSKEGSLPYNQVLLSDLFKENGEVALQALEQAELISVSSINGCPETVKPGKPVYRAVFKKLTENKTLSSRLDLEILSRLISKENKSIGKYEEELRLLGSLPKQPRELTSRIQWLLQKVYNSQNKISRYETESAFLQMILRRGH.

In terms of domain architecture, RRM spans proline 223–lysine 315. A helical transmembrane segment spans residues isoleucine 331–isoleucine 351. Residues arginine 352–histidine 864 lie on the Mitochondrial intermembrane side of the membrane.

Belongs to the YME2 family.

It localises to the mitochondrion inner membrane. Its function is as follows. Plays a role in maintaining the mitochondrial genome and in controlling the mtDNA escape. Involved in the regulation of mtDNA nucleotide structure and number. May have a dispensable role in early maturation of pre-rRNA. The sequence is that of Mitochondrial escape protein 2 (yme2) from Aspergillus oryzae (strain ATCC 42149 / RIB 40) (Yellow koji mold).